Consider the following 111-residue polypeptide: Cell cycle protein GpsB (111 aa).

Residues 32–63 (LDDIMKDYDAYEAIIKELKGEIARLKAQAANS) are a coiled coil. Positions 59–80 (QAANSPKTTLPTEESNDVLRTE) are disordered. A compositionally biased stretch (polar residues) spans 60–71 (AANSPKTTLPTE).

It belongs to the GpsB family. Forms polymers through the coiled coil domains. Interacts with PBP1, MreC and EzrA.

Its subcellular location is the cytoplasm. Functionally, divisome component that associates with the complex late in its assembly, after the Z-ring is formed, and is dependent on DivIC and PBP2B for its recruitment to the divisome. Together with EzrA, is a key component of the system that regulates PBP1 localization during cell cycle progression. Its main role could be the removal of PBP1 from the cell pole after pole maturation is completed. Also contributes to the recruitment of PBP1 to the division complex. Not essential for septum formation. This Streptococcus suis (strain 98HAH33) protein is Cell cycle protein GpsB.